A 185-amino-acid chain; its full sequence is UPF0200 protein TK1334 (185 aa).

7-14 (GMPGSGKS) provides a ligand contact to ATP.

Belongs to the UPF0200 family.

The sequence is that of UPF0200 protein TK1334 from Thermococcus kodakarensis (strain ATCC BAA-918 / JCM 12380 / KOD1) (Pyrococcus kodakaraensis (strain KOD1)).